The chain runs to 651 residues: Beta-glucuronidase (651 aa).

Residues Met1–Gly22 form the signal peptide. N-linked (GlcNAc...) asparagine glycans are attached at residues Asn173, Asn190, Asn272, and Asn420. Glu451 (proton donor) is an active-site residue. The N-linked (GlcNAc...) asparagine glycan is linked to Asn631.

Belongs to the glycosyl hydrolase 2 family. Homotetramer.

The protein localises to the lysosome. It catalyses the reaction a beta-D-glucuronoside + H2O = D-glucuronate + an alcohol. Inhibited by L-aspartic acid. Plays an important role in the degradation of dermatan and keratan sulfates. In Pongo abelii (Sumatran orangutan), this protein is Beta-glucuronidase (GUSB).